The primary structure comprises 904 residues: Thiamine diphosphate dependent-3-acetyloctanal synthase PigD (904 aa).

The disordered stretch occupies residues 879–904 (RKAWAAQQPESTSTAFDQDPTQEATS). Polar residues predominate over residues 886 to 904 (QPESTSTAFDQDPTQEATS).

This sequence belongs to the TPP enzyme family. It depends on thiamine diphosphate as a cofactor.

It carries out the reaction (2E)-octenal + pyruvate + H(+) = (S)-3-acetyloctanal + CO2. The protein operates within antibiotic biosynthesis; prodigiosin biosynthesis. Its function is as follows. Involved in the biosynthesis of 2-methyl-3-n-amyl-pyrrole (MAP), one of the terminal products involved in the biosynthesis of the red antibiotic prodigiosin (Pig). Catalyzes the decarboxylation of pyruvate, followed by the modification of the resulting two-carbon fragment acetaldehyde at the C3 position of the 2-octenal (1,2-addition of acetaldehyde) giving 3-acetyloctanal. In vitro, it can act on a number of alpha,beta-unsaturated carbonyl compounds, including aldehydes and ketones, and can catalyze both 1,2-addition and Stetter-type 1,4-addition depending on the substrate. The sequence is that of Thiamine diphosphate dependent-3-acetyloctanal synthase PigD from Serratia marcescens.